Consider the following 79-residue polypeptide: Protein B6 (79 aa).

This is Protein B6 (B6) from Human herpesvirus 6B (strain Z29) (HHV-6 variant B).